Reading from the N-terminus, the 2667-residue chain is eIF-2-alpha kinase activator GCN1 (2667 aa).

8 HEAT repeats span residues 19-56, 95-132, 159-198, 293-330, 336-375, 398-439, 466-503, and 794-832; these read DSFY…HELS, QWIF…VKFT, SFSL…LQHM, DLQS…DFNV, LLKS…RSKD, SQKL…SISI, ELPE…PEAN, and LLNE…ELFV. Residues 842–879 are disordered; sequence RNDRKVKPKTAEEQRDEESRKRIEEKKKIQSGELEKQE. HEAT repeat units lie at residues 929-967, 985-1024, 1085-1122, 1199-1237, 1290-1330, 1333-1370, 1371-1407, 1412-1450, 1454-1491, 1492-1529, 1533-1570, 1572-1608, 1610-1647, 1652-1689, 1691-1728, 1729-1766, 1770-1807, and 1809-1845; these read PIIV…LDRS, LSEI…IIKN, GVET…IYSP, HMIP…ATAL, GELL…HMDA, PKVS…SFKK, QGDR…VKGL, LKNY…TIGR, PYII…QLSG, HGVK…CAPK, SCLP…VIRN, EIQI…HTID, ASLS…LTEP, PYLN…GMGE, NFST…SLDI, SRFN…SLGD, PYLP…QFAV, and GIEV…KLAG. The interval 1853–1875 is disordered; it reads SNNSSYNAKDDDDDEPGSSGNDI. HEAT repeat units lie at residues 1882 to 1919, 1923 to 1960, 1962 to 1998, 2002 to 2039, 2040 to 2078, 2080 to 2110, 2114 to 2152, 2154 to 2190, 2193 to 2230, and 2264 to 2301; these read ERLG…NTPK, EILP…KLSD, ILPE…SAKT, PYLS…TFGS, KASN…VRSS, VLPV…DAGE, VHLS…SIDE, GWDT…GNTM, EYPE…SLKK, and KGLA…HTSA. Residues 2265 to 2412 are RWDBD region; sequence GLASVLPVLI…ISQESKLRAL (148 aa). The HEAT 37; degenerate repeat unit spans residues 2326–2348; it reads QVKSAILQTLSLLISKSPASMKI. Residues 2349 to 2385 form an HEAT 38; degenerate repeat; it reads FLHQLQPTFIKCLSDSHKNVRTNAASALGLLMTLSSS. HEAT repeat units follow at residues 2387–2421, 2425–2462, 2508–2545, and 2546–2583; these read DQLV…KKPK, ATLD…CFTS, PNMP…ASPL, and TYAK…SNQQ.

Belongs to the GCN1 family. As to quaternary structure, interacts with eif2ak4/gcn2; this interaction stimulates the eif2ak4/gcn2 kinase activity and is impaired by impact upon a variety of stress conditions, such as amino acid depletion, UV-C irradiation, proteasome inhibitor treatment and glucose deprivation. Interacts with impact; this prevents the interaction of gcn1 with eif2ak4/gcn2 and inhibits eif2ak4/gcn2 kinase activity.

Its subcellular location is the cytoplasm. In terms of biological role, ribosome collision sensor that activates a translation quality control pathway when a ribosome has stalled during translation. Directly binds to the ribosome and acts as a sentinel for colliding ribosomes. Gcn1 also acts as a positive activator of the integrated stress response (ISR) by mediating activation of eif2ak4/gcn2 in response to amino acid starvation. Interaction with eif2ak4/gcn2 on translating ribosomes stimulates eif2ak4/gcn2 kinase activity, leading to phosphorylation of eukaryotic translation initiation factor 2 (eIF-2-alpha/eif2s1). EIF2S1/eIF-2-alpha phosphorylation converts EIF2S1/eIF-2-alpha into a global protein synthesis inhibitor, leading to a global attenuation of cap-dependent translation, and thus to a reduced overall utilization of amino acids, while concomitantly initiating the preferential translation of ISR-specific mRNAs, such as the transcriptional activator atf4, and hence allowing atf4-mediated reprogramming of amino acid biosynthetic gene expression to alleviate nutrient depletion. This Dictyostelium discoideum (Social amoeba) protein is eIF-2-alpha kinase activator GCN1.